Here is a 204-residue protein sequence, read N- to C-terminus: MDRVLLLLSVLSLGVSSQPITDSQRLFSIAVSRVQHLHLLAQRLFSDFESSLQTEEQRQLNKIFLQDFCNSDYIISPIDKHETQRSSVLKLLSISYRLVESWEFPSRSLSGGSAPRNQISPKLSDLKTGILLLIRANQDGAEIFPDSSTLQLAPYGNYYQSLSGDESLRRTYELLACFKKDMHKVETYLTVAKCRLSPEANCTL.

Positions 1-17 (MDRVLLLLSVLSLGVSS) are cleaved as a signal peptide. Residue Q18 is modified to Pyrrolidone carboxylic acid. Position 36 (H36) interacts with Zn(2+). An intrachain disulfide couples C69 to C177. E186 is a binding site for Zn(2+). C194 and C202 are joined by a disulfide.

It belongs to the somatotropin/prolactin family.

The protein resides in the secreted. Its function is as follows. Growth hormone plays an important role in growth control and is involved in the regulation of several anabolic processes. Implicated as an osmoregulatory substance important for seawater adaptation. This Sciaenops ocellatus (Red drum) protein is Somatotropin (gh).